The following is a 172-amino-acid chain: uncharacterized protein (172 aa).

This is an uncharacterized protein from Orgyia pseudotsugata (Douglas-fir tussock moth).